A 781-amino-acid polypeptide reads, in one-letter code: Zinc finger protein klf1 (781 aa).

C2H2-type zinc fingers lie at residues 17-41 and 47-70; these read YKCD…FRSH and FICP…NQKH.

It localises to the nucleus. The protein resides in the cytoplasm. The protein localises to the cytoskeleton. It is found in the spindle. Required for maintaining cell viability in nitrogen-deficient stationary phase (G0) cells. The protein is Zinc finger protein klf1 (klf1) of Schizosaccharomyces pombe (strain 972 / ATCC 24843) (Fission yeast).